We begin with the raw amino-acid sequence, 86 residues long: Large ribosomal subunit protein bL31m (86 aa).

Residues 1-18 (MKCSLRLFEKAGRLSVRS) constitute a mitochondrion transit peptide.

It belongs to the bacterial ribosomal protein bL31 family. Highly divergent. In terms of assembly, component of the mitochondrial large ribosomal subunit (mt-LSU). Mature yeast 74S mitochondrial ribosomes consist of a small (37S) and a large (54S) subunit. The 37S small subunit contains a 15S ribosomal RNA (15S mt-rRNA) and at least 32 different proteins. The 54S large subunit contains a 21S rRNA (21S mt-rRNA) and at least 45 different proteins.

Its subcellular location is the mitochondrion. Functionally, component of the mitochondrial ribosome (mitoribosome), a dedicated translation machinery responsible for the synthesis of mitochondrial genome-encoded proteins, including at least some of the essential transmembrane subunits of the mitochondrial respiratory chain. The mitoribosomes are attached to the mitochondrial inner membrane and translation products are cotranslationally integrated into the membrane. In Schizosaccharomyces pombe (strain 972 / ATCC 24843) (Fission yeast), this protein is Large ribosomal subunit protein bL31m (tam9).